A 127-amino-acid chain; its full sequence is Glycine cleavage system H protein (127 aa).

Positions 27-109 (TVRVGITHIA…YGEGWLYEVK (83 aa)) constitute a Lipoyl-binding domain. K68 is modified (N6-lipoyllysine).

This sequence belongs to the GcvH family. The glycine cleavage system is composed of four proteins: P, T, L and H. It depends on (R)-lipoate as a cofactor.

The glycine cleavage system catalyzes the degradation of glycine. The H protein shuttles the methylamine group of glycine from the P protein to the T protein. This chain is Glycine cleavage system H protein, found in Corynebacterium jeikeium (strain K411).